The primary structure comprises 776 residues: Transcription activator of gluconeogenesis HCAG_03671 (776 aa).

The segment at 1–70 is disordered; sequence MTASTQNGSP…NAKDPLRPRR (70 aa). Polar residues-rich tracts occupy residues 21 to 41 and 50 to 60; these read NQES…QSPA and ENGQKHTSTAA. Positions 77–105 form a DNA-binding region, zn(2)-C6 fungal-type; the sequence is CFACQRAHLTCGDERPCQRCIKRGLQDAC. Disordered stretches follow at residues 140-159, 179-248, 286-351, 556-593, and 651-726; these read RTNA…KDSR, TQAK…PFGA, GAGD…NIYN, NLNV…GGGG, and REAQ…SPKQ. A compositionally biased stretch (low complexity) spans 142-155; it reads NASQQQNGPNSNSN. The segment covering 195–217 has biased composition (polar residues); the sequence is MQDTSINPSAFQAPSPTSTPNFD. Residues 218-229 are compositionally biased toward low complexity; it reads LSSNPPNRNLSS. Composition is skewed to polar residues over residues 230 to 244, 292 to 322, 334 to 351, and 557 to 576; these read AMTQ…QTQD, PSDS…NTQP, WNPS…NIYN, and LNVN…TPRN. Residues 657–669 show a composition bias toward gly residues; sequence GPDGKGGGGGGGD. The span at 670–714 shows a compositional bias: low complexity; that stretch reads VATTAATTSTSTSNGANSSGHANANRNNTNPNNSSPPSSSSAAAA.

It belongs to the ERT1/acuK family.

It localises to the nucleus. In terms of biological role, transcription factor which regulates nonfermentable carbon utilization. Activator of gluconeogenetic genes. The polypeptide is Transcription activator of gluconeogenesis HCAG_03671 (Ajellomyces capsulatus (strain NAm1 / WU24) (Darling's disease fungus)).